The primary structure comprises 205 residues: Small ribosomal subunit protein uS4 (205 aa).

Residues 1-44 form a disordered region; the sequence is MSKRHSQKYKIDRRMGENLWGRPKSPVNSRSYGPGQHGQRRKTK. Positions 94–173 constitute an S4 RNA-binding domain; it reads SRLDAIVYRC…LPEYIDLDAK (80 aa).

It belongs to the universal ribosomal protein uS4 family. In terms of assembly, part of the 30S ribosomal subunit. Contacts protein S5. The interaction surface between S4 and S5 is involved in control of translational fidelity.

Its function is as follows. One of the primary rRNA binding proteins, it binds directly to 16S rRNA where it nucleates assembly of the body of the 30S subunit. With S5 and S12 plays an important role in translational accuracy. This is Small ribosomal subunit protein uS4 from Maricaulis maris (strain MCS10) (Caulobacter maris).